The sequence spans 77 residues: Cysteine-rich protein 1 (77 aa).

The region spanning 2–63 is the LIM zinc-binding domain; sequence PKCPKCDKEV…HPCYSAMFGP (62 aa). N6-acetyllysine occurs at positions 9 and 22. An Omega-N-methylarginine modification is found at arginine 68.

Seems to have a role in zinc absorption and may function as an intracellular zinc transport protein. This chain is Cysteine-rich protein 1 (Crip1), found in Mus musculus (Mouse).